The chain runs to 232 residues: Phosphoglycolate phosphatase (232 aa).

Asp13 (nucleophile) is an active-site residue. Residues Asp13, Asp15, and Asp175 each contribute to the Mg(2+) site.

It belongs to the HAD-like hydrolase superfamily. CbbY/CbbZ/Gph/YieH family. As to quaternary structure, monomer. It depends on Mg(2+) as a cofactor. Chloride is required as a cofactor.

The enzyme catalyses 2-phosphoglycolate + H2O = glycolate + phosphate. It participates in organic acid metabolism; glycolate biosynthesis; glycolate from 2-phosphoglycolate: step 1/1. In terms of biological role, specifically catalyzes the dephosphorylation of 2-phosphoglycolate. Is involved in the dissimilation of the intracellular 2-phosphoglycolate formed during the DNA repair of 3'-phosphoglycolate ends, a major class of DNA lesions induced by oxidative stress. The protein is Phosphoglycolate phosphatase of Yersinia pseudotuberculosis serotype I (strain IP32953).